Here is a 155-residue protein sequence, read N- to C-terminus: Ribosomal RNA large subunit methyltransferase H (155 aa).

Residues Gly104 and 123 to 128 (LSAMTF) each bind S-adenosyl-L-methionine.

The protein belongs to the RNA methyltransferase RlmH family. In terms of assembly, homodimer.

Its subcellular location is the cytoplasm. The catalysed reaction is pseudouridine(1915) in 23S rRNA + S-adenosyl-L-methionine = N(3)-methylpseudouridine(1915) in 23S rRNA + S-adenosyl-L-homocysteine + H(+). Its function is as follows. Specifically methylates the pseudouridine at position 1915 (m3Psi1915) in 23S rRNA. In Oleidesulfovibrio alaskensis (strain ATCC BAA-1058 / DSM 17464 / G20) (Desulfovibrio alaskensis), this protein is Ribosomal RNA large subunit methyltransferase H.